The following is a 123-amino-acid chain: Large ribosomal subunit protein uL18 (123 aa).

It belongs to the universal ribosomal protein uL18 family. In terms of assembly, part of the 50S ribosomal subunit; part of the 5S rRNA/L5/L18/L25 subcomplex. Contacts the 5S and 23S rRNAs.

Its function is as follows. This is one of the proteins that bind and probably mediate the attachment of the 5S RNA into the large ribosomal subunit, where it forms part of the central protuberance. In Bifidobacterium animalis subsp. lactis (strain AD011), this protein is Large ribosomal subunit protein uL18.